We begin with the raw amino-acid sequence, 202 residues long: Transmembrane 4 L6 family member 1 (202 aa).

The Cytoplasmic segment spans residues 1–9 (MCYGKCARC). The helical transmembrane segment at 10–30 (IGHSLVGLALLCIAANILLYF) threads the bilayer. The Extracellular segment spans residues 31-49 (PNGETKYASENHLSRFVWF). The chain crosses the membrane as a helical span at residues 50–70 (FSGIVGGGLLMLLPAFVFIGL). Residues 71–93 (EQDDCCGCCGHENCGKRCAMLSS) are Cytoplasmic-facing. The helical transmembrane segment at 94–114 (VLAALIGIAGSGYCVIVAALG) threads the bilayer. The Extracellular portion of the chain corresponds to 115–161 (LAEGPLCLDSLGQWNYTFASTEGQYLLDTSTWSECTEPKHIVEWNVS). N-linked (GlcNAc...) asparagine glycans are attached at residues asparagine 129 and asparagine 159. Residues 162-182 (LFSILLALGGIEFILCLIQVI) traverse the membrane as a helical segment. The Cytoplasmic segment spans residues 183–202 (NGVLGGICGFCCSHQQQYDC).

It belongs to the L6 tetraspanin family. Present in high molecular weight complexes in tumor cells. Interacts with SDCBP2. Highly expressed in lung, breast, colon and ovarian carcinomas. It is also present on some normal cells, endothelial cells in particular.

The protein resides in the membrane. The protein is Transmembrane 4 L6 family member 1 (TM4SF1) of Homo sapiens (Human).